The sequence spans 171 residues: Adenine phosphoribosyltransferase (171 aa).

Belongs to the purine/pyrimidine phosphoribosyltransferase family. In terms of assembly, homodimer.

It localises to the cytoplasm. The catalysed reaction is AMP + diphosphate = 5-phospho-alpha-D-ribose 1-diphosphate + adenine. It functions in the pathway purine metabolism; AMP biosynthesis via salvage pathway; AMP from adenine: step 1/1. Catalyzes a salvage reaction resulting in the formation of AMP, that is energically less costly than de novo synthesis. This chain is Adenine phosphoribosyltransferase, found in Shouchella clausii (strain KSM-K16) (Alkalihalobacillus clausii).